Consider the following 192-residue polypeptide: Fe/S biogenesis protein NfuA (192 aa).

Residues Cys149 and Cys152 each coordinate [4Fe-4S] cluster.

It belongs to the NfuA family. Homodimer. It depends on [4Fe-4S] cluster as a cofactor.

Involved in iron-sulfur cluster biogenesis. Binds a 4Fe-4S cluster, can transfer this cluster to apoproteins, and thereby intervenes in the maturation of Fe/S proteins. Could also act as a scaffold/chaperone for damaged Fe/S proteins. In Idiomarina loihiensis (strain ATCC BAA-735 / DSM 15497 / L2-TR), this protein is Fe/S biogenesis protein NfuA.